Consider the following 390-residue polypeptide: UPF0229 protein Cbei_0567 (390 aa).

Residues 77–108 (SGVGNEKRGEKLGNGNKKLAKGNQGAGNEEGD) form a disordered region. Residues 89-103 (GNGNKKLAKGNQGAG) show a composition bias toward low complexity.

This sequence belongs to the UPF0229 family.

This Clostridium beijerinckii (strain ATCC 51743 / NCIMB 8052) (Clostridium acetobutylicum) protein is UPF0229 protein Cbei_0567.